A 388-amino-acid polypeptide reads, in one-letter code: Na(+)/H(+) antiporter NhaA (388 aa).

Over 1-11 (MKHLHRFFSSD) the chain is Cytoplasmic. A helical membrane pass occupies residues 12 to 31 (ASGGIILIIAAVLAMIMANS). Residues 32–58 (GATSGWYHDFLETPVQLRVGTLEINKN) lie on the Periplasmic side of the membrane. Residues 59–80 (MLLWINDALMAVFFLLVGLEVK) form a helical membrane-spanning segment. Residues 81-96 (RELMQGSLASLRQAAF) lie on the Cytoplasmic side of the membrane. The chain crosses the membrane as a helical span at residues 97-116 (PVIAAIGGMIVPALLYLAFN). The Periplasmic segment spans residues 117–122 (YADPIT). Residues 123–130 (REGWAIPA) traverse the membrane as a helical segment. Residues 131–154 (ATDIAFALGVLALLGSRVPLALKI) are Cytoplasmic-facing. Residues 155–176 (FLMALAIIDDLGAIIIIALFYT) form a helical membrane-spanning segment. The Periplasmic portion of the chain corresponds to 177–180 (NDLS). Residues 181–200 (MASLGVAAVAIAVLVVLNLC) traverse the membrane as a helical segment. Residues 201–204 (GVRR) lie on the Cytoplasmic side of the membrane. The helical transmembrane segment at 205 to 222 (TGVYILVGVVLWTAVLKS) threads the bilayer. Residue glycine 223 is a topological domain, periplasmic. Residues 224–236 (VHATLAGVIVGFF) traverse the membrane as a helical segment. The Cytoplasmic segment spans residues 237-253 (IPLKEKHGRSPAKRLEH). A helical membrane pass occupies residues 254–272 (VLHPWVAYLILPLFAFANA). The Periplasmic portion of the chain corresponds to 273 to 286 (GVSLQGVTLEGLTS). A helical transmembrane segment spans residues 287–310 (ILPLGIIAGLLIGKPLGISLFCWL). The Cytoplasmic segment spans residues 311 to 339 (ALRLKLAHLPEGTTYQQIMAVGILCGIGF). A helical membrane pass occupies residues 340-350 (TMSIFIASLAF). Residues 351–357 (GSVDPEL) lie on the Periplasmic side of the membrane. The helical transmembrane segment at 358-380 (INWAKLGILVGSISSAVIGYSWL) threads the bilayer. Residues 381-388 (RVRLRPSV) lie on the Cytoplasmic side of the membrane.

The protein belongs to the NhaA Na(+)/H(+) (TC 2.A.33) antiporter family.

Its subcellular location is the cell inner membrane. The catalysed reaction is Na(+)(in) + 2 H(+)(out) = Na(+)(out) + 2 H(+)(in). Its function is as follows. Na(+)/H(+) antiporter that extrudes sodium in exchange for external protons. The chain is Na(+)/H(+) antiporter NhaA from Escherichia coli O1:K1 / APEC.